The following is a 90-amino-acid chain: Probable Fe(2+)-trafficking protein (90 aa).

It belongs to the Fe(2+)-trafficking protein family.

Functionally, could be a mediator in iron transactions between iron acquisition and iron-requiring processes, such as synthesis and/or repair of Fe-S clusters in biosynthetic enzymes. In Xylella fastidiosa (strain M23), this protein is Probable Fe(2+)-trafficking protein.